Consider the following 2071-residue polypeptide: GTPase-activating protein BEM2 (2071 aa).

2 disordered regions span residues 1–115 (MPLK…QAHK) and 171–195 (AAPAREGRYSHQPTASLSSIGSERP). Low complexity-rich tracts occupy residues 16 to 31 (PQSCASKPSSASQSSC) and 42 to 55 (SSISSNSSPNSKNN). Positions 62–80 (SNGSVYSDETTLKTAQTHY) are enriched in polar residues. Residues 81 to 110 (TQQGQQAKPQQHTQQQQQQPQTPMQLQVPT) are compositionally biased toward low complexity. Positions 181–191 (HQPTASLSSIG) are enriched in polar residues. The Ras-GEF domain maps to 471–738 (DTEKVANQIH…MEMSLKMEPP (268 aa)). Polar residues predominate over residues 787-811 (PSTKNNNSSQASNRISQLSVNSTPH). Disordered stretches follow at residues 787–819 (PSTKNNNSSQASNRISQLSVNSTPHSNASSSSA), 1645–1676 (RSVLIQHPNKVSVSSASSSVSGSSSGSTARTS), and 1702–1738 (SVSSRSSVISNTATATSPASGASPNQTSTSHHGGMGK). Low complexity-rich tracts occupy residues 1656-1676 (SVSSASSSVSGSSSGSTARTS) and 1702-1726 (SVSSRSSVISNTATATSPASGASPN). Positions 1751–1853 (SGFTSSSSQY…WMKAITLSKR (103 aa)) constitute a PH domain. One can recognise a Rho-GAP domain in the interval 1872–2070 (VPVEDVCERE…HLIRNPEHYF (199 aa)).

Functionally, GTPase-activating protein (GAP) for RHO proteins. Required for polarized growth and maintenance of cell polarity. The chain is GTPase-activating protein BEM2 (BEM2) from Eremothecium gossypii (strain ATCC 10895 / CBS 109.51 / FGSC 9923 / NRRL Y-1056) (Yeast).